The primary structure comprises 360 residues: UDP-N-acetylglucosamine--N-acetylmuramyl-(pentapeptide) pyrophosphoryl-undecaprenol N-acetylglucosamine transferase (360 aa).

Residues T13–G15, N125, R164, S191, and Q290 each bind UDP-N-acetyl-alpha-D-glucosamine.

The protein belongs to the glycosyltransferase 28 family. MurG subfamily.

The protein resides in the cell inner membrane. It catalyses the reaction di-trans,octa-cis-undecaprenyl diphospho-N-acetyl-alpha-D-muramoyl-L-alanyl-D-glutamyl-meso-2,6-diaminopimeloyl-D-alanyl-D-alanine + UDP-N-acetyl-alpha-D-glucosamine = di-trans,octa-cis-undecaprenyl diphospho-[N-acetyl-alpha-D-glucosaminyl-(1-&gt;4)]-N-acetyl-alpha-D-muramoyl-L-alanyl-D-glutamyl-meso-2,6-diaminopimeloyl-D-alanyl-D-alanine + UDP + H(+). It functions in the pathway cell wall biogenesis; peptidoglycan biosynthesis. In terms of biological role, cell wall formation. Catalyzes the transfer of a GlcNAc subunit on undecaprenyl-pyrophosphoryl-MurNAc-pentapeptide (lipid intermediate I) to form undecaprenyl-pyrophosphoryl-MurNAc-(pentapeptide)GlcNAc (lipid intermediate II). The polypeptide is UDP-N-acetylglucosamine--N-acetylmuramyl-(pentapeptide) pyrophosphoryl-undecaprenol N-acetylglucosamine transferase (Hahella chejuensis (strain KCTC 2396)).